The following is a 543-amino-acid chain: CTP synthase (543 aa).

The tract at residues 1-265 (MARYIFITGG…DEEVLAAFGI (265 aa)) is amidoligase domain. Residue serine 13 coordinates CTP. Residue serine 13 participates in UTP binding. 14 to 19 (SLGKGL) provides a ligand contact to ATP. Tyrosine 54 contacts L-glutamine. Aspartate 71 serves as a coordination point for ATP. Residues aspartate 71 and glutamate 139 each coordinate Mg(2+). CTP contacts are provided by residues 146-148 (DIE), 186-191 (KTKPTQ), and lysine 222. Residues 186-191 (KTKPTQ) and lysine 222 each bind UTP. Residue 238-240 (RDA) coordinates ATP. The region spanning 291–542 (TIAIVGKYTG…IEAAMAQSRL (252 aa)) is the Glutamine amidotransferase type-1 domain. Glycine 353 provides a ligand contact to L-glutamine. Cysteine 380 serves as the catalytic Nucleophile; for glutamine hydrolysis. Residues 381–384 (FGMQ), glutamate 404, and arginine 470 contribute to the L-glutamine site. Catalysis depends on residues histidine 515 and glutamate 517.

The protein belongs to the CTP synthase family. In terms of assembly, homotetramer.

It carries out the reaction UTP + L-glutamine + ATP + H2O = CTP + L-glutamate + ADP + phosphate + 2 H(+). The enzyme catalyses L-glutamine + H2O = L-glutamate + NH4(+). The catalysed reaction is UTP + NH4(+) + ATP = CTP + ADP + phosphate + 2 H(+). It functions in the pathway pyrimidine metabolism; CTP biosynthesis via de novo pathway; CTP from UDP: step 2/2. Its activity is regulated as follows. Allosterically activated by GTP, when glutamine is the substrate; GTP has no effect on the reaction when ammonia is the substrate. The allosteric effector GTP functions by stabilizing the protein conformation that binds the tetrahedral intermediate(s) formed during glutamine hydrolysis. Inhibited by the product CTP, via allosteric rather than competitive inhibition. Its function is as follows. Catalyzes the ATP-dependent amination of UTP to CTP with either L-glutamine or ammonia as the source of nitrogen. Regulates intracellular CTP levels through interactions with the four ribonucleotide triphosphates. In Rhodopseudomonas palustris (strain BisA53), this protein is CTP synthase.